Here is a 571-residue protein sequence, read N- to C-terminus: Asparagine--tRNA ligase, cytoplasmic 3 (571 aa).

Residue G2 is modified to N-acetylglycine. The segment at residues 50 to 128 (VRIGGWVKTG…QSIELSVETV (79 aa)) is a DNA-binding region (OB). The region spanning 233-289 (DVEAARLIVKERGEAVAQLKVAKASKEEITASVAQLSVAKASLAHVEERLRLKPGLP) is the WHEP-TRS domain.

Belongs to the class-II aminoacyl-tRNA synthetase family.

The protein localises to the cytoplasm. The protein resides in the cytosol. It catalyses the reaction tRNA(Asn) + L-asparagine + ATP = L-asparaginyl-tRNA(Asn) + AMP + diphosphate + H(+). The protein is Asparagine--tRNA ligase, cytoplasmic 3 of Arabidopsis thaliana (Mouse-ear cress).